The primary structure comprises 308 residues: HTH-type transcriptional regulator SsuR (308 aa).

The region spanning 1–59 (MNFQQLRFVREAVRQNMNLTEVANVLYTSQSGVSKQIKDLEDELGVDIFIRRGKRLTGL) is the HTH lysR-type domain. Positions 19 to 38 (LTEVANVLYTSQSGVSKQIK) form a DNA-binding region, H-T-H motif.

This sequence belongs to the LysR transcriptional regulatory family.

Its function is as follows. Transcriptional regulator that is essential for the utilization of a number of organic sulfur sources of either environmental or human origin. Required for aliphatic sulfonate utilization. Binds to DNA at target promoter regions. Targets include the ssuDBC operon, the tauABC operon, three tauD-type genes and atsA. In Burkholderia cenocepacia (strain ATCC BAA-245 / DSM 16553 / LMG 16656 / NCTC 13227 / J2315 / CF5610) (Burkholderia cepacia (strain J2315)), this protein is HTH-type transcriptional regulator SsuR.